The chain runs to 134 residues: Transcription antitermination protein NusB (134 aa).

This sequence belongs to the NusB family.

In terms of biological role, involved in transcription antitermination. Required for transcription of ribosomal RNA (rRNA) genes. Binds specifically to the boxA antiterminator sequence of the ribosomal RNA (rrn) operons. The protein is Transcription antitermination protein NusB of Shewanella loihica (strain ATCC BAA-1088 / PV-4).